The chain runs to 400 residues: Phosphoglycerate kinase (400 aa).

Substrate contacts are provided by residues Asp-23 to Asn-25, Arg-38, His-61 to Arg-64, Arg-120, and Arg-153. ATP is bound by residues Lys-203, Glu-325, and Gly-355–Thr-358.

Belongs to the phosphoglycerate kinase family. Monomer.

Its subcellular location is the cytoplasm. It carries out the reaction (2R)-3-phosphoglycerate + ATP = (2R)-3-phospho-glyceroyl phosphate + ADP. Its pathway is carbohydrate degradation; glycolysis; pyruvate from D-glyceraldehyde 3-phosphate: step 2/5. The protein is Phosphoglycerate kinase of Methylobacterium radiotolerans (strain ATCC 27329 / DSM 1819 / JCM 2831 / NBRC 15690 / NCIMB 10815 / 0-1).